A 363-amino-acid polypeptide reads, in one-letter code: Dihydroorotate dehydrogenase (quinone) (363 aa).

FMN is bound by residues 67–71 and T91; that span reads AGLDK. Residue K71 coordinates substrate. 116 to 120 is a substrate binding site; the sequence is NRMGF. Residues N145 and N178 each contribute to the FMN site. Residue N178 coordinates substrate. S181 (nucleophile) is an active-site residue. A substrate-binding site is contributed by N183. FMN-binding residues include K219 and T247. 248-249 is a binding site for substrate; that stretch reads NT. Residues G268, G297, and 318–319 contribute to the FMN site; that span reads YT.

The protein belongs to the dihydroorotate dehydrogenase family. Type 2 subfamily. Monomer. FMN is required as a cofactor.

The protein localises to the cell membrane. The catalysed reaction is (S)-dihydroorotate + a quinone = orotate + a quinol. It functions in the pathway pyrimidine metabolism; UMP biosynthesis via de novo pathway; orotate from (S)-dihydroorotate (quinone route): step 1/1. Its function is as follows. Catalyzes the conversion of dihydroorotate to orotate with quinone as electron acceptor. The polypeptide is Dihydroorotate dehydrogenase (quinone) (Myxococcus xanthus (strain DK1622)).